A 34-amino-acid chain; its full sequence is Photosystem II reaction center protein M (34 aa).

Residues 5 to 25 form a helical membrane-spanning segment; it reads ILAFIATALFILIPTAFLLIL.

It belongs to the PsbM family. PSII is composed of 1 copy each of membrane proteins PsbA, PsbB, PsbC, PsbD, PsbE, PsbF, PsbH, PsbI, PsbJ, PsbK, PsbL, PsbM, PsbT, PsbX, PsbY, PsbZ, Psb30/Ycf12, at least 3 peripheral proteins of the oxygen-evolving complex and a large number of cofactors. It forms dimeric complexes.

The protein localises to the plastid. Its subcellular location is the chloroplast thylakoid membrane. Its function is as follows. One of the components of the core complex of photosystem II (PSII). PSII is a light-driven water:plastoquinone oxidoreductase that uses light energy to abstract electrons from H(2)O, generating O(2) and a proton gradient subsequently used for ATP formation. It consists of a core antenna complex that captures photons, and an electron transfer chain that converts photonic excitation into a charge separation. This subunit is found at the monomer-monomer interface. The polypeptide is Photosystem II reaction center protein M (Anthoceros angustus (Hornwort)).